A 255-amino-acid polypeptide reads, in one-letter code: Anamorsin homolog (255 aa).

The segment at 1 to 163 (MPKETLVVSK…VRPNWKSKTD (163 aa)) is N-terminal SAM-like domain. Positions 164–185 (KKSPSMIDAAPIDGYISKAPDY) are linker. Residues C188, C195, C198, and C200 each contribute to the [2Fe-2S] cluster site. Positions 188 to 200 (CSTKPRACANCTC) are fe-S binding site A. The [4Fe-4S] cluster site is built by C224, C227, C235, and C238. 2 short sequence motifs (cx2C motif) span residues 224 to 227 (CGNC) and 235 to 238 (CESC). Residues 224-238 (CGNCYLGDAFRCESC) form a fe-S binding site B region.

It belongs to the anamorsin family. In terms of assembly, monomer. [2Fe-2S] cluster serves as cofactor. [4Fe-4S] cluster is required as a cofactor.

It is found in the cytoplasm. Its subcellular location is the mitochondrion intermembrane space. Functionally, component of the cytosolic iron-sulfur (Fe-S) protein assembly (CIA) machinery. Required for the maturation of extramitochondrial Fe-S proteins. Part of an electron transfer chain functioning in an early step of cytosolic Fe-S biogenesis, facilitating the de novo assembly of a [4Fe-4S] cluster on the cytosolic Fe-S scaffold complex. Electrons are transferred from NADPH via a FAD- and FMN-containing diflavin oxidoreductase. Together with the diflavin oxidoreductase, also required for the assembly of the diferric tyrosyl radical cofactor of ribonucleotide reductase (RNR), probably by providing electrons for reduction during radical cofactor maturation in the catalytic small subunit. The polypeptide is Anamorsin homolog (Theileria annulata).